Consider the following 356-residue polypeptide: NADH-quinone oxidoreductase subunit H (356 aa).

Transmembrane regions (helical) follow at residues 4–24, 79–99, 127–147, 166–186, 198–218, 251–271, 289–309, and 329–349; these read ALIL…LTGV, LLAP…IPFG, GVLY…IAGW, ISYE…TGSL, MWNI…TAMF, FFLA…LLFF, FIGL…FIWV, and MIPW…YWKE.

It belongs to the complex I subunit 1 family. In terms of assembly, NDH-1 is composed of 14 different subunits. Subunits NuoA, H, J, K, L, M, N constitute the membrane sector of the complex.

The protein resides in the cell inner membrane. The catalysed reaction is a quinone + NADH + 5 H(+)(in) = a quinol + NAD(+) + 4 H(+)(out). In terms of biological role, NDH-1 shuttles electrons from NADH, via FMN and iron-sulfur (Fe-S) centers, to quinones in the respiratory chain. The immediate electron acceptor for the enzyme in this species is believed to be ubiquinone. Couples the redox reaction to proton translocation (for every two electrons transferred, four hydrogen ions are translocated across the cytoplasmic membrane), and thus conserves the redox energy in a proton gradient. This subunit may bind ubiquinone. The chain is NADH-quinone oxidoreductase subunit H from Leptospira biflexa serovar Patoc (strain Patoc 1 / ATCC 23582 / Paris).